Reading from the N-terminus, the 90-residue chain is Probable Fe(2+)-trafficking protein (90 aa).

This sequence belongs to the Fe(2+)-trafficking protein family.

Its function is as follows. Could be a mediator in iron transactions between iron acquisition and iron-requiring processes, such as synthesis and/or repair of Fe-S clusters in biosynthetic enzymes. This Pseudomonas putida (strain ATCC 700007 / DSM 6899 / JCM 31910 / BCRC 17059 / LMG 24140 / F1) protein is Probable Fe(2+)-trafficking protein.